A 60-amino-acid chain; its full sequence is MSKSLVPEAKNGLSKFKNEVARELGVPFSDYNGDLSSRQCGSVGGEMVKRMVEAYESQIK.

Belongs to the alpha/beta-type SASP family. SASP are degraded in the first minutes of spore germination and provide amino acids for both new protein synthesis and metabolism.

In terms of biological role, SASP are bound to spore DNA. They are double-stranded DNA-binding proteins that cause DNA to change to an a-like conformation. They protect the DNA backbone from chemical and enzymatic cleavage and are thus involved in dormant spore's high resistance to UV light. The chain is Small, acid-soluble spore protein 1 (ssp1) from Clostridium perfringens (strain 13 / Type A).